Reading from the N-terminus, the 218-residue chain is Vacuolar protein-sorting-associated protein 37 homolog 2 (218 aa).

The segment at Met1–Ser51 is disordered. A compositionally biased stretch (polar residues) spans Lys8–Pro17. Residues Ser28–Pro40 are compositionally biased toward low complexity. A VPS37 C-terminal domain is found at Gln137–Gly218.

The protein belongs to the VPS37 family. As to quaternary structure, component of the endosomal sorting required for transport complex I (ESCRT-I), composed of ELC, VPS28 and VPS37. Interacts with ELC.

Its subcellular location is the endosome. In terms of biological role, component of the ESCRT-I complex (endosomal sorting complex required for transport I), a regulator of vesicular trafficking process. Required for the sorting of endocytic ubiquitinated cargos into multivesicular bodies (MVBs). This Arabidopsis thaliana (Mouse-ear cress) protein is Vacuolar protein-sorting-associated protein 37 homolog 2 (VPS37-2).